Reading from the N-terminus, the 223-residue chain is Small ribosomal subunit protein uS3 (223 aa).

The KH type-2 domain maps to 39 to 107; that stretch reads VREFLHKKLA…PVQINIEEVR (69 aa).

Belongs to the universal ribosomal protein uS3 family. As to quaternary structure, part of the 30S ribosomal subunit. Forms a tight complex with proteins S10 and S14.

Functionally, binds the lower part of the 30S subunit head. Binds mRNA in the 70S ribosome, positioning it for translation. The sequence is that of Small ribosomal subunit protein uS3 from Francisella tularensis subsp. mediasiatica (strain FSC147).